The following is a 372-amino-acid chain: 2,7-anhydro-N-acetylneuraminate hydratase (372 aa).

NAD(+) contacts are provided by Tyr11, Phe12, Asp33, Asn36, Thr68, Asn70, His73, Glu90, Lys91, and Trp160.

This sequence belongs to the Gfo/Idh/MocA family. In terms of assembly, homodimer. NAD(+) is required as a cofactor.

The enzyme catalyses N-acetyl-2,7-anhydro-alpha-neuraminate + H2O = N-acetyl-alpha-neuraminate. It catalyses the reaction 2-deoxy-2,3-dehydro-N-acetylneuraminate + H2O = N-acetyl-alpha-neuraminate. With respect to regulation, all conversions require NAD(+) as a cofactor, which is regenerated in the reaction. The presence of EGTA and several divalent cations does not affect the activity. Its function is as follows. Hydratase involved in the degradation of sialic acids. Catalyzes the reversible conversion of the dehydrated form of N-acetylneuraminate (Neu5Ac), 2,7-anhydro-N-acetylneuraminate (2,7-AN), to Neu5Ac. Also catalyzes the irreversible conversion of 2-deoxy-2,3-didehydro-N-acetylneuraminate (2,3-EN) to Neu5Ac. The reaction mechanism involves keto intermediates and the transient formation of NADH. This is 2,7-anhydro-N-acetylneuraminate hydratase from Escherichia coli (strain K12).